Reading from the N-terminus, the 293-residue chain is Pyridoxal 5'-phosphate synthase subunit PdxS (293 aa).

Residue aspartate 23 coordinates D-ribose 5-phosphate. Residue lysine 80 is the Schiff-base intermediate with D-ribose 5-phosphate of the active site. Glycine 152 serves as a coordination point for D-ribose 5-phosphate. Arginine 164 is a D-glyceraldehyde 3-phosphate binding site. Residues glycine 213 and 234–235 each bind D-ribose 5-phosphate; that span reads GS.

It belongs to the PdxS/SNZ family. As to quaternary structure, in the presence of PdxT, forms a dodecamer of heterodimers.

It carries out the reaction aldehydo-D-ribose 5-phosphate + D-glyceraldehyde 3-phosphate + L-glutamine = pyridoxal 5'-phosphate + L-glutamate + phosphate + 3 H2O + H(+). The protein operates within cofactor biosynthesis; pyridoxal 5'-phosphate biosynthesis. Its function is as follows. Catalyzes the formation of pyridoxal 5'-phosphate from ribose 5-phosphate (RBP), glyceraldehyde 3-phosphate (G3P) and ammonia. The ammonia is provided by the PdxT subunit. Can also use ribulose 5-phosphate and dihydroxyacetone phosphate as substrates, resulting from enzyme-catalyzed isomerization of RBP and G3P, respectively. This is Pyridoxal 5'-phosphate synthase subunit PdxS from Methanothermobacter thermautotrophicus (strain ATCC 29096 / DSM 1053 / JCM 10044 / NBRC 100330 / Delta H) (Methanobacterium thermoautotrophicum).